We begin with the raw amino-acid sequence, 109 residues long: Small ribosomal subunit protein uS17 (109 aa).

It belongs to the universal ribosomal protein uS17 family. In terms of assembly, part of the 30S ribosomal subunit.

One of the primary rRNA binding proteins, it binds specifically to the 5'-end of 16S ribosomal RNA. The protein is Small ribosomal subunit protein uS17 of Methanococcoides burtonii (strain DSM 6242 / NBRC 107633 / OCM 468 / ACE-M).